Consider the following 87-residue polypeptide: UPF0729 protein C18orf32 homolog (87 aa).

This sequence belongs to the UPF0729 family.

The chain is UPF0729 protein C18orf32 homolog from Esox lucius (Northern pike).